We begin with the raw amino-acid sequence, 230 residues long: Cytidylate kinase (230 aa).

ATP is bound at residue 10–18; that stretch reads GPAGSGKST.

The protein belongs to the cytidylate kinase family. Type 1 subfamily.

It localises to the cytoplasm. The catalysed reaction is CMP + ATP = CDP + ADP. It carries out the reaction dCMP + ATP = dCDP + ADP. This chain is Cytidylate kinase, found in Leptospira borgpetersenii serovar Hardjo-bovis (strain L550).